Here is a 147-residue protein sequence, read N- to C-terminus: Small ribosomal subunit protein uS9 (147 aa).

The segment at 128-147 (KERKKYGQMGARAKYRWSKR) is disordered.

This sequence belongs to the universal ribosomal protein uS9 family.

The chain is Small ribosomal subunit protein uS9 (rpsI) from Aquifex aeolicus (strain VF5).